The following is a 347-amino-acid chain: MQTKNILDFEYSDLQSYLLNELGLEKFRTDQICDWIYKKRVFDFESMTNLSKDDRQKLSDNFKISIPHIVKKEVSKIDGTTKYLLELEDKNTVEAVIIYYPSRTIACISTQVGCPLKCSFCSTGQSGYVRNLSTGEIIGQLLAMEKDKEMDVKNVVYMGMGEPLLNFNNVVQTIEILNHPKMKKLGARHITISTAGIPQKIEEVGDLNKEFRLSVSLHAPTNLQRDQIMPINHKYPVEQVIQSCRIYQKKTKKRVTFEYILIKGFNDSKEDALKLVELFGDLKVMVNLIPVNENPAGFEKPSKRFIQAFLDTLVKNGIDAVVRAEKGSDISAACGQLRTRELKEANR.

The active-site Proton acceptor is the glutamate 94. A Radical SAM core domain is found at 100 to 319 (YPSRTIACIS…LDTLVKNGID (220 aa)). Residues cysteine 107 and cysteine 334 are joined by a disulfide bond. [4Fe-4S] cluster is bound by residues cysteine 114, cysteine 118, and cysteine 121. Residues 161–162 (GE), serine 193, 216–218 (SLH), and asparagine 292 each bind S-adenosyl-L-methionine. The S-methylcysteine intermediate role is filled by cysteine 334.

The protein belongs to the radical SAM superfamily. RlmN family. [4Fe-4S] cluster is required as a cofactor.

The protein resides in the cytoplasm. It carries out the reaction adenosine(2503) in 23S rRNA + 2 reduced [2Fe-2S]-[ferredoxin] + 2 S-adenosyl-L-methionine = 2-methyladenosine(2503) in 23S rRNA + 5'-deoxyadenosine + L-methionine + 2 oxidized [2Fe-2S]-[ferredoxin] + S-adenosyl-L-homocysteine. The enzyme catalyses adenosine(37) in tRNA + 2 reduced [2Fe-2S]-[ferredoxin] + 2 S-adenosyl-L-methionine = 2-methyladenosine(37) in tRNA + 5'-deoxyadenosine + L-methionine + 2 oxidized [2Fe-2S]-[ferredoxin] + S-adenosyl-L-homocysteine. In terms of biological role, specifically methylates position 2 of adenine 2503 in 23S rRNA and position 2 of adenine 37 in tRNAs. The polypeptide is Probable dual-specificity RNA methyltransferase RlmN (Petrotoga mobilis (strain DSM 10674 / SJ95)).